A 338-amino-acid polypeptide reads, in one-letter code: Ribosomal RNA small subunit methyltransferase H (338 aa).

S-adenosyl-L-methionine is bound by residues 53–55, aspartate 72, tyrosine 99, aspartate 123, and glutamine 130; that span reads GGH. A disordered region spans residues 277 to 298; that stretch reads ITPRSKSKSPEGLPVELPGMGP.

This sequence belongs to the methyltransferase superfamily. RsmH family.

The protein localises to the cytoplasm. The enzyme catalyses cytidine(1402) in 16S rRNA + S-adenosyl-L-methionine = N(4)-methylcytidine(1402) in 16S rRNA + S-adenosyl-L-homocysteine + H(+). Its function is as follows. Specifically methylates the N4 position of cytidine in position 1402 (C1402) of 16S rRNA. This Rhodococcus opacus (strain B4) protein is Ribosomal RNA small subunit methyltransferase H.